The sequence spans 384 residues: Homoserine O-succinyltransferase (384 aa).

Positions 51–361 (NAILICHALS…ETSQGHDAFL (311 aa)) constitute an AB hydrolase-1 domain. Catalysis depends on Ser157, which acts as the Nucleophile. Arg227 contacts substrate. Active-site residues include Asp324 and His357. Substrate is bound at residue Asp358.

This sequence belongs to the AB hydrolase superfamily. MetX family. In terms of assembly, homodimer.

It localises to the cytoplasm. The enzyme catalyses L-homoserine + succinyl-CoA = O-succinyl-L-homoserine + CoA. It functions in the pathway amino-acid biosynthesis; L-methionine biosynthesis via de novo pathway; O-succinyl-L-homoserine from L-homoserine: step 1/1. Functionally, transfers a succinyl group from succinyl-CoA to L-homoserine, forming succinyl-L-homoserine. The chain is Homoserine O-succinyltransferase from Alkalilimnicola ehrlichii (strain ATCC BAA-1101 / DSM 17681 / MLHE-1).